Consider the following 986-residue polypeptide: Anoctamin-1 (986 aa).

Over methionine 1 to alanine 333 the chain is Cytoplasmic. Residues leucine 79–glutamate 121 form a disordered region. Serine 107 and serine 196 each carry phosphoserine. The helical transmembrane segment at tryptophan 334–leucine 354 threads the bilayer. Residues tyrosine 355 to asparagine 406 lie on the Extracellular side of the membrane. 4 cysteine pairs are disulfide-bonded: cysteine 370-cysteine 395, cysteine 379-cysteine 862, cysteine 382-cysteine 386, and cysteine 651-cysteine 656. The chain crosses the membrane as a helical span at residues proline 407–tryptophan 427. Glutamate 425 is a Ca(2+) binding site. Topologically, residues lysine 428–asparagine 519 are cytoplasmic. A helical transmembrane segment spans residues leucine 520 to tyrosine 540. The Extracellular segment spans residues arginine 541–alanine 568. Residues valine 569–tryptophan 589 form a helical membrane-spanning segment. Topologically, residues leucine 590 to isoleucine 607 are cytoplasmic. Residues phenylalanine 608–phenylalanine 628 traverse the membrane as a helical segment. Topologically, residues lysine 629–leucine 657 are extracellular. The helical transmembrane segment at methionine 658–leucine 678 threads the bilayer. Ca(2+)-binding residues include asparagine 677, glutamate 680, glutamate 728, glutamate 731, glutamate 760, and aspartate 764. The Cytoplasmic portion of the chain corresponds to phenylalanine 679–leucine 725. 2 helical membrane passes run threonine 726 to phenylalanine 746 and proline 747 to lysine 767. Topologically, residues phenylalanine 768–glycine 784 are cytoplasmic. Residues isoleucine 785–isoleucine 805 traverse the membrane as a helical segment. Residues serine 806–alanine 892 are Extracellular-facing. Residue asparagine 832 is glycosylated (N-linked (GlcNAc...) asparagine). The helical transmembrane segment at phenylalanine 893 to proline 913 threads the bilayer. Ca(2+) contacts are provided by aspartate 909 and aspartate 914. The Cytoplasmic portion of the chain corresponds to aspartate 914–leucine 986. The segment covering lysine 951–cysteine 960 has biased composition (basic and acidic residues). The tract at residues lysine 951–leucine 986 is disordered.

Belongs to the anoctamin family. Homodimer. Interacts with CFTR. Interacts with TRPV4. As to expression, expressed in nasal epithelial cells (at protein level). In the kidney, expressed in the collecting duct (at protein level). Broadly expressed with higher levels in liver, skeletal muscle and gastrointestinal muscles. Expressed in eccrine sweat glands.

The protein localises to the apical cell membrane. It is found in the presynapse. It catalyses the reaction chloride(in) = chloride(out). ATP and calmodulin are essential for its activation. Channel activity is inhibited by CFTR protein and by chloride inhibitors such as niflumic acid (NFA) and 4,4'-diisothiocyanatostilbene-2,2'-disulfonic acid (DIDS). Activated by heat with activation seen at temperatures above 44 degrees Celsius. Activated by BDNF in radial glial cells. Functionally, calcium-activated chloride channel (CaCC). Plays a role in transepithelial anion transport and smooth muscle contraction. Required for the normal functioning of the interstitial cells of Cajal (ICCs) which generate electrical pacemaker activity in gastrointestinal smooth muscles. Acts as a major contributor to basal and stimulated chloride conductance in airway epithelial cells and plays an important role in tracheal cartilage development. Required for CFTR activation by enhancing endoplasmic reticulum Ca(2+) store release and is also required for CFTR membrane expression. Required for basal and ATP-dependent mucus secretion in airways and intestine, probably by controlling exocytosis of mucus-filled granules by providing Ca(2+) to an apical signaling compartment. Contributes to airway mucus expression induced by interleukins IL3 and IL8 and by the asthma-associated protein CLCA1 and is required for expression of mucin MUC5AC. However, was shown in another study not to be required for MUC5AC expression. Plays a role in the propagation of Ca(2+) waves in Kolliker's organ in the cochlea and contributes to the refinement of auditory brainstem circuitries prior to hearing onset. In vomeronasal sensory neurons, modulates spontaneous firing patterns in the absence of stimuli as well as the firing pattern of pheromone-evoked activity. Responsible for calcium-activated chloride channel activity in type I taste cells of the vallate papillae. Acts as a heat sensor in nociceptive neurons. In dorsal root ganglion neurons, plays a role in mediating non-histaminergic Mas-related G-protein coupled receptor (MRGPR)-dependent itching, acting as a downstream effector of MRGPRs. In the developing brain, required for the Ca(2+)-dependent process extension of radial glial cells. In terms of biological role, calcium-activated chloride channel (CaCC). Contributes to calcium-activated chloride secretion in human sweat gland epithelial cells. Shows increased basal chloride permeability and decreased Ca(2+)-induced chloride permeability. Calcium-activated chloride channel (CaCC). Shows increased sensitivity to intracellular Ca(2+). This Homo sapiens (Human) protein is Anoctamin-1 (ANO1).